The sequence spans 535 residues: MRGSGAKIAGVLPLFMLFIAGTISAFEDIERLRIWPLPAQVSHGGRRMYLSGDFKLVTEGSKYGDASGILKEGFDRMLGVVRLSHVISGDRNSSGTGGSALLQGLHVIISSSTDELEYGADESYKLVVPSPEKPSYAQLEAKSVYGALHGLQTFSQLCHFNLKKKVIEILMTPWNIIDQPRFSYRGLLIDTSRHYLPLPVIKNVIDSMTYAKLNVLHWHIVDTQSFPLEIPSYPKLWNGAYSSSQRYTFEDAAEIVNYARRRGIHVLAEIDVPGHALSWGKGYPALWPSKNCQEPLDVSSDFTFKVIDGILSDFSKIFKFKFVHLGGDEVNTTCWSATPRIAQWLKKHRMSEKEAYQYFVLRAQKIALSHGYEIINWEETFINFGSKLNRKTVVHNWLNTGLVENVTASGLRCIVSNQEFWYLDHIDAPWQGFYANEPFQNITDKKQQSLVLGGEVCMWGEHIDASDIEQTIWPRAAAAAERLWTPYAKLAKNPNNVTTRLAHFRCLLNQRGVAAAPLVGGGRVVPFEPGSCLAQ.

Positions 1–24 are cleaved as a signal peptide; it reads MRGSGAKIAGVLPLFMLFIAGTIS. An N-linked (GlcNAc...) asparagine glycan is attached at Asn-92. Cys-292 and Cys-334 are disulfide-bonded. Catalysis depends on Glu-329, which acts as the Proton donor. Asn-331, Asn-405, Asn-441, and Asn-496 each carry an N-linked (GlcNAc...) asparagine glycan. Cys-506 and Cys-532 are oxidised to a cystine.

Belongs to the glycosyl hydrolase 20 family. In terms of processing, N-glycosylated. In terms of tissue distribution, expressed in roots, leaves, stems, flowers and siliques.

The protein localises to the cell membrane. It carries out the reaction Hydrolysis of terminal non-reducing N-acetyl-D-hexosamine residues in N-acetyl-beta-D-hexosaminides.. Slightly inhibited by N-acetylcastanospermine. In terms of biological role, has a broad substrate specificity. Can use synthetic substrates such as pyridylaminated chitotriose, p-nitrophenyl-beta-N-acetylglucosaminide, p-nitrophenyl-2-acetamido-2-deoxy-beta-D-glucopyranoside (pNP-GlcNAc), p-nitrophenyl-2-acetamido-2-deoxy-beta-D-galactopyranoside (pNP-GalNAc), 4-methylumbelliferyl-2-acetamido-2-deoxy-beta-D-glucopyranoside (MU-GlcNAc), and 4-methylumbelliferyl-6-sulfo-2-acetamido-2-deoxy-beta-D-glucopyranoside (MU-GlcNAc-6SO(4)) as substrates. Removes terminal GlcNAc residues from alpha1,3- and alpha1,6-mannosyl branches of biantennary N-glycans without any strict branch preference. Required for the presence of paucimannosidic N-glycans in glycoproteins of roots and leaves. This chain is Beta-hexosaminidase 3 (HEXO3), found in Arabidopsis thaliana (Mouse-ear cress).